We begin with the raw amino-acid sequence, 282 residues long: DegV domain-containing protein SpyM3_0586 (282 aa).

In terms of domain architecture, DegV spans 3 to 280; it reads LAVITDSTAT…EGAIAFGVTP (278 aa). Hexadecanoate is bound by residues T61 and S94.

In terms of biological role, may bind long-chain fatty acids, such as palmitate, and may play a role in lipid transport or fatty acid metabolism. The chain is DegV domain-containing protein SpyM3_0586 from Streptococcus pyogenes serotype M3 (strain ATCC BAA-595 / MGAS315).